The following is a 363-amino-acid chain: Putative agmatine deiminase (363 aa).

Polar residues predominate over residues 1-10; that stretch reads MTKQLSTSPK. The tract at residues 1–20 is disordered; sequence MTKQLSTSPKQDGFRMPAEH. The Amidino-cysteine intermediate role is filled by C355.

Belongs to the agmatine deiminase family.

It catalyses the reaction agmatine + H2O = N-carbamoylputrescine + NH4(+). This is Putative agmatine deiminase from Photobacterium profundum (strain SS9).